A 325-amino-acid polypeptide reads, in one-letter code: Tetraacyldisaccharide 4'-kinase (325 aa).

ATP is bound at residue 55-62 (TAGGNGKT).

It belongs to the LpxK family.

It catalyses the reaction a lipid A disaccharide + ATP = a lipid IVA + ADP + H(+). It participates in glycolipid biosynthesis; lipid IV(A) biosynthesis; lipid IV(A) from (3R)-3-hydroxytetradecanoyl-[acyl-carrier-protein] and UDP-N-acetyl-alpha-D-glucosamine: step 6/6. Its function is as follows. Transfers the gamma-phosphate of ATP to the 4'-position of a tetraacyldisaccharide 1-phosphate intermediate (termed DS-1-P) to form tetraacyldisaccharide 1,4'-bis-phosphate (lipid IVA). The chain is Tetraacyldisaccharide 4'-kinase from Cronobacter sakazakii (strain ATCC BAA-894) (Enterobacter sakazakii).